The primary structure comprises 180 residues: ATP synthase subunit delta (180 aa).

Belongs to the ATPase delta chain family. As to quaternary structure, F-type ATPases have 2 components, F(1) - the catalytic core - and F(0) - the membrane proton channel. F(1) has five subunits: alpha(3), beta(3), gamma(1), delta(1), epsilon(1). F(0) has three main subunits: a(1), b(2) and c(10-14). The alpha and beta chains form an alternating ring which encloses part of the gamma chain. F(1) is attached to F(0) by a central stalk formed by the gamma and epsilon chains, while a peripheral stalk is formed by the delta and b chains.

The protein localises to the cell membrane. Its function is as follows. F(1)F(0) ATP synthase produces ATP from ADP in the presence of a proton or sodium gradient. F-type ATPases consist of two structural domains, F(1) containing the extramembraneous catalytic core and F(0) containing the membrane proton channel, linked together by a central stalk and a peripheral stalk. During catalysis, ATP synthesis in the catalytic domain of F(1) is coupled via a rotary mechanism of the central stalk subunits to proton translocation. Functionally, this protein is part of the stalk that links CF(0) to CF(1). It either transmits conformational changes from CF(0) to CF(1) or is implicated in proton conduction. This chain is ATP synthase subunit delta, found in Bacillus cereus (strain G9842).